Here is a 414-residue protein sequence, read N- to C-terminus: MEVEVKAKKAKEASRKMAVLDTETKNRALINMAEALLENADKILKANEKDVLEAERRNLKASLVDRLKLDEKRIKAMAEGLKEVASLKDPVGDIEEMWIRPNGLQIGKMRVPIGVIGMIYESRPNVTADAAGLCLKAGNAVILRGGSDAINSNIAIASILAEAAYKSGIPEGAIQLIENTDREEVNRMMKLNGLIDLIIPRGGTSLIKNVIENSTVPVIETGVGNCHIFVDESANFEMAKDIIVNAKVQRPGVCNAVETVLVHKGIAERFLPVMVKELSSHGVEIRGCELTKRICPDVKEATEEDWATEYLDLILAVKVVENIDEALEHISKYSTGHSESIVTENYTNAMRFLKSVDSAAVYVNASTRFTDGGEFGFGAEIGISTQKMHARGPMGLKELTTYKYVILGSGQIRK.

Belongs to the gamma-glutamyl phosphate reductase family.

The protein resides in the cytoplasm. It carries out the reaction L-glutamate 5-semialdehyde + phosphate + NADP(+) = L-glutamyl 5-phosphate + NADPH + H(+). The protein operates within amino-acid biosynthesis; L-proline biosynthesis; L-glutamate 5-semialdehyde from L-glutamate: step 2/2. Its function is as follows. Catalyzes the NADPH-dependent reduction of L-glutamate 5-phosphate into L-glutamate 5-semialdehyde and phosphate. The product spontaneously undergoes cyclization to form 1-pyrroline-5-carboxylate. In Caldanaerobacter subterraneus subsp. tengcongensis (strain DSM 15242 / JCM 11007 / NBRC 100824 / MB4) (Thermoanaerobacter tengcongensis), this protein is Gamma-glutamyl phosphate reductase.